We begin with the raw amino-acid sequence, 556 residues long: Arginine--tRNA ligase (556 aa).

A 'HIGH' region motif is present at residues 132 to 142 (VNPTGDLHLGH).

It belongs to the class-I aminoacyl-tRNA synthetase family. In terms of assembly, monomer.

It localises to the cytoplasm. It catalyses the reaction tRNA(Arg) + L-arginine + ATP = L-arginyl-tRNA(Arg) + AMP + diphosphate. The protein is Arginine--tRNA ligase of Oceanobacillus iheyensis (strain DSM 14371 / CIP 107618 / JCM 11309 / KCTC 3954 / HTE831).